The following is a 430-amino-acid chain: MISVYSISLGCPKNRVDTEWLLGVLGPEVRPVREMADADLVLINTCGFIAPAVEESVRTVVEAVAELEDLPRRPLLAVAGCLVGRYGRQDLAAELPEVDLWLTNRDMDAWPEMIGRALGVAVHVPPVRLLSTGPSYAYLKVSDGCGHNCSFCTIPSIRGGLVSTPADVLEAEAVNLLSRGVKELIFVAQDVAAYGRDMGLRHGLRSLLDRLLPLDGLERLRLMYLYPAGLDAGLLRYLRDAGKPFVPYFDIPVQHAHPDVLSRMGRPFARNPREVVDRVRDVFPEAALRTSIIVGFPGETQQHYDHLTRFVQDVRFMHLGVFAYRAEEGTPAAGMPGQVDEVEKDWRRDALMEVQAEISEEILEGFTGSDEDVLVDAAHEEWPGLHVGRTWFQAPEIDGVTYISGPGVKPGAMVRAEIVESRTYDLVALS.

The 118-residue stretch at 2-119 folds into the MTTase N-terminal domain; that stretch reads ISVYSISLGC…WPEMIGRALG (118 aa). [4Fe-4S] cluster is bound by residues cysteine 11, cysteine 46, cysteine 81, cysteine 145, cysteine 149, and cysteine 152. In terms of domain architecture, Radical SAM core spans 131-361; that stretch reads STGPSYAYLK…MEVQAEISEE (231 aa). A TRAM domain is found at 364-430; the sequence is EGFTGSDEDV…SRTYDLVALS (67 aa).

Belongs to the methylthiotransferase family. RimO subfamily. [4Fe-4S] cluster serves as cofactor.

It is found in the cytoplasm. The enzyme catalyses L-aspartate(89)-[ribosomal protein uS12]-hydrogen + (sulfur carrier)-SH + AH2 + 2 S-adenosyl-L-methionine = 3-methylsulfanyl-L-aspartate(89)-[ribosomal protein uS12]-hydrogen + (sulfur carrier)-H + 5'-deoxyadenosine + L-methionine + A + S-adenosyl-L-homocysteine + 2 H(+). Its function is as follows. Catalyzes the methylthiolation of an aspartic acid residue of ribosomal protein uS12. In Oleidesulfovibrio alaskensis (strain ATCC BAA-1058 / DSM 17464 / G20) (Desulfovibrio alaskensis), this protein is Ribosomal protein uS12 methylthiotransferase RimO.